We begin with the raw amino-acid sequence, 140 residues long: Sex-regulated protein janus-B (140 aa).

A substrate-binding site is contributed by Arg-42. His-69 acts as the Proton acceptor in catalysis. 110 to 112 provides a ligand contact to substrate; sequence SRT.

The protein belongs to the janus family.

JanA and janB regulate somatic sex differentiation. In Drosophila erecta (Fruit fly), this protein is Sex-regulated protein janus-B (janB).